The following is a 439-amino-acid chain: GTPase Der (439 aa).

EngA-type G domains follow at residues 2–168 (ATVL…EEKG) and 181–357 (IKIA…SSYT). Residues 8-15 (GKPNVGKS), 55-59 (DTCGV), 118-121 (NKTE), 187-194 (GRPNVGKS), 234-238 (DTAGL), and 300-303 (NKWD) contribute to the GTP site. The KH-like domain occupies 358–439 (TKVPSSALNS…PIFLKFKKSR (82 aa)).

It belongs to the TRAFAC class TrmE-Era-EngA-EngB-Septin-like GTPase superfamily. EngA (Der) GTPase family. As to quaternary structure, associates with the 50S ribosomal subunit.

Functionally, GTPase that plays an essential role in the late steps of ribosome biogenesis. This Thermotoga neapolitana (strain ATCC 49049 / DSM 4359 / NBRC 107923 / NS-E) protein is GTPase Der.